We begin with the raw amino-acid sequence, 140 residues long: uncharacterized protein (140 aa).

Belongs to the MG067/MG068/MG395 family.

This is an uncharacterized protein from Mycoplasma pneumoniae (strain ATCC 29342 / M129 / Subtype 1) (Mycoplasmoides pneumoniae).